We begin with the raw amino-acid sequence, 149 residues long: Transcriptional repressor NrdR (149 aa).

A zinc finger spans residues 3–34 (CPFCSTEETKVIDSRLVSDGYQVRRRRECTKC). Positions 49–139 (PKIIKNNGMR…VYLSFENINE (91 aa)) constitute an ATP-cone domain.

This sequence belongs to the NrdR family. Requires Zn(2+) as cofactor.

Functionally, negatively regulates transcription of bacterial ribonucleotide reductase nrd genes and operons by binding to NrdR-boxes. The protein is Transcriptional repressor NrdR of Mannheimia succiniciproducens (strain KCTC 0769BP / MBEL55E).